The chain runs to 27 residues: Protamine-A (27 aa).

A disordered region spans residues 1–27 (ARRRRRHASTKLKRRRRRRRHGKKSHK).

Testis.

It localises to the nucleus. The protein localises to the chromosome. Protamines substitute for histones in the chromatin of sperm during the haploid phase of spermatogenesis. They compact sperm DNA into a highly condensed, stable and inactive complex. The polypeptide is Protamine-A (Acipenser stellatus (Sevruga)).